A 468-amino-acid chain; its full sequence is Tyrosine-protein phosphatase YopH (468 aa).

The disordered stretch occupies residues 127 to 194 (ARGHVSSHSH…TVSPYGPEAR (68 aa)). A compositionally biased stretch (low complexity) spans 130–140 (HVSSHSHSVLH). The Tyrosine-protein phosphatase domain occupies 152–461 (SHLDPRTPPL…DVLIKLAEGQ (310 aa)). Residue C403 is the Phosphocysteine intermediate of the active site.

The protein belongs to the protein-tyrosine phosphatase family. Non-receptor class subfamily. In terms of assembly, monomer.

It localises to the secreted. The catalysed reaction is O-phospho-L-tyrosyl-[protein] + H2O = L-tyrosyl-[protein] + phosphate. Essential virulence determinant. This protein is a protein tyrosine phosphatase. The essential function of YopH in Yersinia pathogenesis is host-protein dephosphorylation. It contributes to the ability of the bacteria to resist phagocytosis by peritoneal macrophages. The polypeptide is Tyrosine-protein phosphatase YopH (yopH) (Yersinia enterocolitica).